The sequence spans 529 residues: Probable DNA helicase MPN_340 (529 aa).

The UvrD-like helicase ATP-binding domain maps to 2–285 (EHLNQEQKAA…FYTTQNYRSI (284 aa)). 23 to 30 (SGAGTGKT) contributes to the ATP binding site.

Belongs to the helicase family. UvrD subfamily.

The catalysed reaction is Couples ATP hydrolysis with the unwinding of duplex DNA by translocating in the 3'-5' direction.. It carries out the reaction ATP + H2O = ADP + phosphate + H(+). The protein is Probable DNA helicase MPN_340 of Mycoplasma pneumoniae (strain ATCC 29342 / M129 / Subtype 1) (Mycoplasmoides pneumoniae).